Reading from the N-terminus, the 1570-residue chain is Mediator of RNA polymerase II transcription subunit 1 (1570 aa).

2 short sequence motifs (LXXLL motif) span residues 585–589 (LTSLL) and 626–630 (LMNLL). Disordered stretches follow at residues 592–687 (TNNT…TEDD), 771–880 (SKLS…FKDF), and 922–1561 (SKTL…MDDD). The segment covering 675 to 687 (TGAEKMKNQTEDD) has biased composition (basic and acidic residues). Polar residues-rich tracts occupy residues 788-801 (RDSS…STLF), 832-861 (GSPN…QSGF), and 931-942 (QETQSRSQSPLL). A compositionally biased stretch (basic and acidic residues) spans 946-958 (LGKDRPQKQKVKE). A compositionally biased stretch (gly residues) spans 961–970 (NGGGAGGGLS). Composition is skewed to low complexity over residues 1022–1035 (PTST…GTSG), 1066–1082 (SSHG…SSSS), 1089–1113 (SSLS…MKIG), 1121–1140 (SGQS…SMGK), and 1152–1161 (SSNVSNSSGS). Residues 1173 to 1190 (MNPSLSKPNISPSHSRPS) show a composition bias toward polar residues. Residues 1217–1228 (GSGGQHLSGGGS) show a composition bias toward gly residues. Positions 1229–1271 (NSTTKSSSGLVSSGSLSQKPNSSSSSSSSSSSSSSSSSSSSSS) are enriched in low complexity. Polar residues predominate over residues 1276 to 1287 (VSQNLHGNSKGK). Over residues 1308 to 1328 (VGTGGPGSEDPMDGGGGGGST) the composition is skewed to gly residues. Positions 1347–1359 (PTKREKSEKDKSK) are enriched in basic and acidic residues. Composition is skewed to polar residues over residues 1418–1433 (SQMQ…SGST) and 1441–1455 (PSHN…QALD). Residues 1459-1469 (ESGSSSIAEKS) show a composition bias toward low complexity. The segment covering 1494–1503 (KHKKHKKEKK) has biased composition (basic residues). The segment covering 1504–1516 (RLKDKDRDREKKK) has biased composition (basic and acidic residues). Residues 1536–1546 (MAMSGGSMMSS) show a composition bias toward low complexity.

This sequence belongs to the Mediator complex subunit 1 family. Component of the Mediator complex.

The protein resides in the nucleus. Component of the Mediator complex, a coactivator involved in the regulated transcription of nearly all RNA polymerase II-dependent genes. Mediator functions as a bridge to convey information from gene-specific regulatory proteins to the basal RNA polymerase II transcription machinery. Mediator is recruited to promoters by direct interactions with regulatory proteins and serves as a scaffold for the assembly of a functional preinitiation complex with RNA polymerase II and the general transcription factors. This Xenopus laevis (African clawed frog) protein is Mediator of RNA polymerase II transcription subunit 1 (med1).